We begin with the raw amino-acid sequence, 253 residues long: Ribosome maturation protein SBDS (253 aa).

This sequence belongs to the SDO1/SBDS family. In terms of assembly, associates with the 60S ribosomal subunit.

It is found in the cytoplasm. It localises to the nucleus. The protein localises to the nucleolus. The protein resides in the nucleoplasm. Its subcellular location is the cytoskeleton. It is found in the spindle. Functionally, required for the assembly of mature ribosomes and ribosome biogenesis. Together with K10C3.5b/EFL1, triggers the GTP-dependent release of ribosome maturation factors from 60S pre-ribosomes in the cytoplasm, thereby activating ribosomes for translation competence by allowing 80S ribosome assembly. Required for normal levels of protein synthesis. May play a role in cellular stress resistance. May play a role in cellular response to DNA damage. May play a role in cell proliferation. The sequence is that of Ribosome maturation protein SBDS (sbds-1) from Caenorhabditis elegans.